The primary structure comprises 391 residues: Coiled-coil domain-containing protein 85C (391 aa).

2 coiled-coil regions span residues 19 to 86 (EELL…RELC) and 116 to 146 (KEVGVYQQKLKELEAKQESLIRDNLELKEII). Disordered regions lie at residues 155 to 238 (GAGS…LNDS) and 278 to 303 (PYHSESQLSPLPQYQEPLQNGSTRVT). A compositionally biased stretch (polar residues) spans 157-175 (GSRSSIDSQNSLTNLNGSS). The span at 182-194 (DGSSTSSTGSAGS) shows a compositional bias: low complexity. A compositionally biased stretch (polar residues) spans 280–303 (HSESQLSPLPQYQEPLQNGSTRVT).

The protein belongs to the CCDC85 family.

It is found in the cell junction. The protein localises to the tight junction. It localises to the adherens junction. Functionally, may play a role in cell-cell adhesion and epithelium development through its interaction with proteins of the beta-catenin family. May play an important role in cortical development, especially in the maintenance of radial glia. The polypeptide is Coiled-coil domain-containing protein 85C (ccdc85c) (Xenopus tropicalis (Western clawed frog)).